We begin with the raw amino-acid sequence, 119 residues long: Holo-[acyl-carrier-protein] synthase (119 aa).

Mg(2+) contacts are provided by Asp-8 and Glu-58.

It belongs to the P-Pant transferase superfamily. AcpS family. Mg(2+) is required as a cofactor.

Its subcellular location is the cytoplasm. The enzyme catalyses apo-[ACP] + CoA = holo-[ACP] + adenosine 3',5'-bisphosphate + H(+). Its function is as follows. Transfers the 4'-phosphopantetheine moiety from coenzyme A to a Ser of acyl-carrier-protein. The sequence is that of Holo-[acyl-carrier-protein] synthase from Bacillus cereus (strain ATCC 10987 / NRS 248).